We begin with the raw amino-acid sequence, 365 residues long: Ferredoxin--NADP reductase, chloroplastic (365 aa).

The disordered stretch occupies residues Met-1–Arg-22. The span at Phe-11 to Arg-22 shows a compositional bias: polar residues. Positions Lys-86–Met-208 constitute an FAD-binding FR-type domain. FAD contacts are provided by residues Arg-144–Ser-147, Cys-165–Lys-167, Tyr-171, Val-182–Ser-184, and Thr-223. Ser-147 and Lys-167 together coordinate NADP(+). NADP(+) is bound by residues Thr-223, Val-255–Pro-256, Ser-285–Arg-286, Lys-295, Gly-324–Leu-325, and Glu-363.

This sequence belongs to the ferredoxin--NADP reductase type 1 family. FAD serves as cofactor.

Its subcellular location is the plastid. The protein localises to the chloroplast stroma. It is found in the chloroplast thylakoid membrane. It catalyses the reaction 2 reduced [2Fe-2S]-[ferredoxin] + NADP(+) + H(+) = 2 oxidized [2Fe-2S]-[ferredoxin] + NADPH. The protein operates within energy metabolism; photosynthesis. In terms of biological role, may play a key role in regulating the relative amounts of cyclic and non-cyclic electron flow to meet the demands of the plant for ATP and reducing power. The polypeptide is Ferredoxin--NADP reductase, chloroplastic (PETH) (Mesembryanthemum crystallinum (Common ice plant)).